Consider the following 408-residue polypeptide: tRNA-specific 2-thiouridylase MnmA (408 aa).

ATP is bound by residues 38-45 (GMSGGVDS) and Met-64. The segment at 124 to 126 (NPD) is interaction with target base in tRNA. Cys-129 serves as the catalytic Nucleophile. A disulfide bond links Cys-129 and Cys-231. Position 153 (Gly-153) interacts with ATP. The interaction with tRNA stretch occupies residues 181 to 183 (KDQ). Cys-231 functions as the Cysteine persulfide intermediate in the catalytic mechanism. Positions 348-349 (RY) are interaction with tRNA.

This sequence belongs to the MnmA/TRMU family.

Its subcellular location is the cytoplasm. It carries out the reaction S-sulfanyl-L-cysteinyl-[protein] + uridine(34) in tRNA + AH2 + ATP = 2-thiouridine(34) in tRNA + L-cysteinyl-[protein] + A + AMP + diphosphate + H(+). Functionally, catalyzes the 2-thiolation of uridine at the wobble position (U34) of tRNA, leading to the formation of s(2)U34. In Psychrobacter arcticus (strain DSM 17307 / VKM B-2377 / 273-4), this protein is tRNA-specific 2-thiouridylase MnmA.